We begin with the raw amino-acid sequence, 88 residues long: FXYD domain-containing ion transport regulator 3 (88 aa).

The signal sequence occupies residues 1–17; sequence MHEVALSVLILLAGLSA. At 18 to 38 the chain is on the extracellular side; the sequence is LDANDPEDKNSPFYYDWHSLR. Residues 39–59 form a helical membrane-spanning segment; the sequence is VGGLICAGTPCALGIIILLSG. The Cytoplasmic segment spans residues 60–88; sequence KCKCKFSQKPSHRPGDAPPLITPGSAHDC. The segment at 66 to 88 is disordered; sequence SQKPSHRPGDAPPLITPGSAHDC.

The protein belongs to the FXYD family. Regulatory subunit of the sodium/potassium-transporting ATPase which is composed of a catalytic alpha subunit, a non-catalytic beta subunit and an additional regulatory subunit. Interacts with catalytic alpha subunit ATP1A1. Also interacts with non-catalytic beta subunit ATP1B1. Interacts with the alpha1-beta1, alpha2-beta1 and alpha3-beta1 NKA isozymes. In terms of processing, glutathionylated.

The protein resides in the cell membrane. Associates with and regulates the activity of the sodium/potassium-transporting ATPase (NKA) which transports Na(+) out of the cell and K(+) into the cell. Reduces glutathionylation of the NKA beta-1 subunit ATP1B1, thus reversing glutathionylation-mediated inhibition of ATP1B1. Induces a hyperpolarization-activated chloride current when expressed in Xenopus oocytes. The chain is FXYD domain-containing ion transport regulator 3 (FXYD3) from Sus scrofa (Pig).